The following is a 133-amino-acid chain: Ribosome-binding factor A (133 aa).

This sequence belongs to the RbfA family. Monomer. Binds 30S ribosomal subunits, but not 50S ribosomal subunits or 70S ribosomes.

The protein localises to the cytoplasm. Functionally, one of several proteins that assist in the late maturation steps of the functional core of the 30S ribosomal subunit. Associates with free 30S ribosomal subunits (but not with 30S subunits that are part of 70S ribosomes or polysomes). Required for efficient processing of 16S rRNA. May interact with the 5'-terminal helix region of 16S rRNA. This Bordetella parapertussis (strain 12822 / ATCC BAA-587 / NCTC 13253) protein is Ribosome-binding factor A.